The sequence spans 99 residues: Spore coat protein F-like protein YraD (99 aa).

The protein belongs to the CotF family.

The protein localises to the spore coat. This is Spore coat protein F-like protein YraD (yraD) from Bacillus subtilis (strain 168).